Here is a 74-residue protein sequence, read N- to C-terminus: Large ribosomal subunit protein bL31 (74 aa).

Positions 16, 18, 38, and 41 each coordinate Zn(2+).

This sequence belongs to the bacterial ribosomal protein bL31 family. Type A subfamily. In terms of assembly, part of the 50S ribosomal subunit. The cofactor is Zn(2+).

Functionally, binds the 23S rRNA. In Mycolicibacterium vanbaalenii (strain DSM 7251 / JCM 13017 / BCRC 16820 / KCTC 9966 / NRRL B-24157 / PYR-1) (Mycobacterium vanbaalenii), this protein is Large ribosomal subunit protein bL31.